A 333-amino-acid chain; its full sequence is PDZ domain-containing protein GIPC1 (333 aa).

A compositionally biased stretch (basic residues) spans 1–11 (MPLGLGRRKKA). The tract at residues 1–53 (MPLGLGRRKKAPPLVENEEAEPSRSGLGVGEPGPLGGSAAGESQMGLPPPPAA) is disordered. A compositionally biased stretch (gly residues) spans 27 to 39 (LGVGEPGPLGGSA). Residue S68 is modified to Phosphoserine. A PDZ domain is found at 133–213 (EVEVFKSEEA…GRTFTLKLTE (81 aa)). Residues S222, S225, and S232 each carry the phosphoserine modification. The disordered stretch occupies residues 223 to 244 (QRSAGGHPGSGPQLGTGRGTLR). Residues 228–240 (GHPGSGPQLGTGR) are compositionally biased toward gly residues. At T242 the chain carries Phosphothreonine. S247 bears the Phosphoserine mark.

Belongs to the GIPC family. In terms of assembly, interacts with GLUT1 (C-terminus), ACTN1, KIF1B, MYO6 and PLEKHG5. Interacts with RGS19 C-terminus. Interacts with SDC4/syndecan-4 and SEMA4C/semaphorin-4C. Widely expressed.

It localises to the cytoplasm. The protein localises to the membrane. Its function is as follows. Inhibits endothelial cell migration (in vitro). May be involved in G protein-linked signaling. This Mus musculus (Mouse) protein is PDZ domain-containing protein GIPC1 (Gipc1).